The sequence spans 259 residues: DNA-directed RNA polymerase subunit Rpo3 (259 aa).

It belongs to the archaeal Rpo3/eukaryotic RPB3 RNA polymerase subunit family. In terms of assembly, part of the RNA polymerase complex.

It is found in the cytoplasm. The catalysed reaction is RNA(n) + a ribonucleoside 5'-triphosphate = RNA(n+1) + diphosphate. In terms of biological role, DNA-dependent RNA polymerase (RNAP) catalyzes the transcription of DNA into RNA using the four ribonucleoside triphosphates as substrates. The polypeptide is DNA-directed RNA polymerase subunit Rpo3 (Pyrococcus horikoshii (strain ATCC 700860 / DSM 12428 / JCM 9974 / NBRC 100139 / OT-3)).